The primary structure comprises 260 residues: uncharacterized protein (260 aa).

An N-terminal signal peptide occupies residues 1–22; it reads MGYLKRFALYISILVLIVMVAG. Cys-23 carries the N-palmitoyl cysteine lipid modification. Cys-23 carries S-diacylglycerol cysteine lipidation.

The protein belongs to the staphylococcal tandem lipoprotein family.

It localises to the cell membrane. This is an uncharacterized protein from Staphylococcus aureus (strain bovine RF122 / ET3-1).